A 298-amino-acid chain; its full sequence is Small ribosomal subunit protein uS2 (298 aa).

A disordered region spans residues E232–E298. Residues F234–P250 show a composition bias toward acidic residues. Residues E251–A276 are compositionally biased toward low complexity.

This sequence belongs to the universal ribosomal protein uS2 family.

The chain is Small ribosomal subunit protein uS2 from Acaryochloris marina (strain MBIC 11017).